The primary structure comprises 1348 residues: Putative late blight resistance protein homolog R1B-12 (1348 aa).

Coiled-coil stretches lie at residues 446–469 (RYSD…ESLQ) and 561–583 (PRMN…KLLN). The region spanning 552–848 (RTSSQLTRTP…ISESFIKSCE (297 aa)) is the NB-ARC domain. 595-602 (GMPGLGKT) lines the ATP pocket. LRR repeat units follow at residues 977–1001 (FKFL…LLYL), 1051–1074 (LRHL…SAKL), 1123–1147 (PITL…ISAQ), 1151–1170 (YLKL…TADH), 1171–1194 (LKHL…EVSN), 1197–1219 (FPQL…ADDA), 1220–1244 (FPNL…FMDI), and 1309–1332 (LPGI…DMDA). An HMA domain is found at 1284–1348 (VKKMVLKFDT…VGKLINRGML (65 aa)).

The protein belongs to the disease resistance NB-LRR family.

It is found in the cytoplasm. Its subcellular location is the membrane. Functionally, confers resistance to late blight (Phytophthora infestans) races carrying the avirulence gene Avr1. Resistance proteins guard the plant against pathogens that contain an appropriate avirulence protein via an indirect interaction with this avirulence protein. That triggers a defense system including the hypersensitive response, which restricts the pathogen growth. This is Putative late blight resistance protein homolog R1B-12 (R1B-12) from Solanum demissum (Wild potato).